Reading from the N-terminus, the 751-residue chain is Trehalose phosphorylase (751 aa).

Residues 1 to 26 (MSTPHHQFESKSSTAIRRRLSSSVSS) constitute a propeptide that is removed on maturation. Residues 1–28 (MSTPHHQFESKSSTAIRRRLSSSVSSKQ) form a disordered region.

Belongs to the glycosyltransferase group 1 family. Glycosyltransferase 4 subfamily. As to quaternary structure, homodimer. In terms of tissue distribution, expressed in mycelia, stipes and pilei.

The enzyme catalyses alpha,alpha-trehalose + phosphate = alpha-D-glucose + alpha-D-glucose 1-phosphate. Reversibly catalyzes the synthesis and degradation of trehalose from glucose and alpha-D-glucose 1-phosphate. The equilibrium lies in the direction of trehalose synthesis. The chain is Trehalose phosphorylase from Pleurotus sajor-caju (Oyster mushroom).